We begin with the raw amino-acid sequence, 250 residues long: Superoxide dismutase 1 copper chaperone (250 aa).

One can recognise an HMA domain in the interval 4 to 67; sequence SFEIVFAVPM…AIQSTGKDAI (64 aa). Residues C15, C18, C229, and C231 each contribute to the Cu cation site.

It belongs to the CCS1 family. Requires Cu(2+) as cofactor.

Its subcellular location is the cytoplasm. In terms of biological role, copper chaperone for superoxide dismutase 1 (SOD1). Binds copper ions and delivers them specifically to SOD1. The polypeptide is Superoxide dismutase 1 copper chaperone (CCS1) (Debaryomyces hansenii (strain ATCC 36239 / CBS 767 / BCRC 21394 / JCM 1990 / NBRC 0083 / IGC 2968) (Yeast)).